Here is an 86-residue protein sequence, read N- to C-terminus: Neurotoxin LmNaTx35.2 (86 aa).

Positions 1-21 (MQLKIQLLMLVLMTVLTGVLG) are cleaved as a signal peptide. The LCN-type CS-alpha/beta domain maps to 22–85 (KDGYVVHEDT…VYGDKGTYCW (64 aa)). Cystine bridges form between cysteine 33–cysteine 84, cysteine 37–cysteine 60, cysteine 46–cysteine 65, and cysteine 50–cysteine 67.

Belongs to the long (4 C-C) scorpion toxin superfamily. Sodium channel inhibitor family. Alpha subfamily. As to expression, expressed by the venom gland.

The protein localises to the secreted. Functionally, binds voltage-independently at site-3 of voltage-gated sodium channels (Nav) and inhibits the inactivation of the activated channels, thereby blocking neuronal transmission. The sequence is that of Neurotoxin LmNaTx35.2 from Lychas mucronatus (Chinese swimming scorpion).